The chain runs to 278 residues: Phosphatidylglycerol--prolipoprotein diacylglyceryl transferase (278 aa).

3 helical membrane-spanning segments follow: residues 21 to 41 (WYGI…QASV), 54 to 74 (IIFW…VIFQ), and 88 to 108 (IWQG…TGII). R136 contacts a 1,2-diacyl-sn-glycero-3-phospho-(1'-sn-glycerol). 3 consecutive transmembrane segments (helical) span residues 176 to 196 (QPTF…LILL), 202 to 222 (IGDT…FVEG), and 234 to 254 (IRIA…IMIV).

Belongs to the Lgt family.

It is found in the cell membrane. It catalyses the reaction L-cysteinyl-[prolipoprotein] + a 1,2-diacyl-sn-glycero-3-phospho-(1'-sn-glycerol) = an S-1,2-diacyl-sn-glyceryl-L-cysteinyl-[prolipoprotein] + sn-glycerol 1-phosphate + H(+). The protein operates within protein modification; lipoprotein biosynthesis (diacylglyceryl transfer). Catalyzes the transfer of the diacylglyceryl group from phosphatidylglycerol to the sulfhydryl group of the N-terminal cysteine of a prolipoprotein, the first step in the formation of mature lipoproteins. The protein is Phosphatidylglycerol--prolipoprotein diacylglyceryl transferase of Staphylococcus saprophyticus subsp. saprophyticus (strain ATCC 15305 / DSM 20229 / NCIMB 8711 / NCTC 7292 / S-41).